The primary structure comprises 155 residues: Small ribosomal subunit protein uS7cz/uS7cy (155 aa).

Belongs to the universal ribosomal protein uS7 family. Part of the 30S ribosomal subunit.

It is found in the plastid. The protein localises to the chloroplast. Its function is as follows. One of the primary rRNA binding proteins, it binds directly to 16S rRNA where it nucleates assembly of the head domain of the 30S subunit. In Populus trichocarpa (Western balsam poplar), this protein is Small ribosomal subunit protein uS7cz/uS7cy (rps7-A).